A 1034-amino-acid chain; its full sequence is Pro-apoptotic serine protease NMA111 (1034 aa).

Residues 1–44 are disordered; the sequence is MELNGSPQKPKRKHSGDPHSLPSAKHLRPDSAAPSSPRISGDQT. The segment covering 33-44 has biased composition (polar residues); it reads APSSPRISGDQT. The tract at residues 89–273 is serine protease; the sequence is VVSIHFCQTA…AATDYFLPLD (185 aa). Residues H127, D158, and S240 each act as charge relay system in the active site. PDZ domains lie at 296 to 381 and 882 to 963; these read QWII…LLVQ and IFCG…VTFD. The tract at residues 1004–1034 is disordered; it reads RRGTGDIANLNADAMDEGRDEGVSDVEPDIE.

Belongs to the peptidase S1C family.

It localises to the nucleus. Its function is as follows. Nuclear serine protease which mediates apoptosis. This chain is Pro-apoptotic serine protease NMA111 (NMA111), found in Coccidioides immitis (strain RS) (Valley fever fungus).